We begin with the raw amino-acid sequence, 411 residues long: LL-diaminopimelate aminotransferase (411 aa).

The substrate site is built by Tyr-15 and Gly-42. Pyridoxal 5'-phosphate-binding positions include Tyr-72, 108–109, Tyr-132, Asn-187, Tyr-218, and 246–248; these read SK and SFS. Substrate is bound by residues Lys-109, Tyr-132, and Asn-187. Lys-249 bears the N6-(pyridoxal phosphate)lysine mark. Pyridoxal 5'-phosphate-binding residues include Arg-257 and Asn-292. 2 residues coordinate substrate: Asn-292 and Arg-388.

It belongs to the class-I pyridoxal-phosphate-dependent aminotransferase family. LL-diaminopimelate aminotransferase subfamily. Homodimer. Requires pyridoxal 5'-phosphate as cofactor.

The enzyme catalyses (2S,6S)-2,6-diaminopimelate + 2-oxoglutarate = (S)-2,3,4,5-tetrahydrodipicolinate + L-glutamate + H2O + H(+). It participates in amino-acid biosynthesis; L-lysine biosynthesis via DAP pathway; LL-2,6-diaminopimelate from (S)-tetrahydrodipicolinate (aminotransferase route): step 1/1. Involved in the synthesis of meso-diaminopimelate (m-DAP or DL-DAP), required for both lysine and peptidoglycan biosynthesis. Catalyzes the direct conversion of tetrahydrodipicolinate to LL-diaminopimelate. This chain is LL-diaminopimelate aminotransferase, found in Citrifermentans bemidjiense (strain ATCC BAA-1014 / DSM 16622 / JCM 12645 / Bem) (Geobacter bemidjiensis).